Here is a 1755-residue protein sequence, read N- to C-terminus: Transposon TyH3 Gag-Pol polyprotein (1755 aa).

Composition is skewed to polar residues over residues 1–23, 48–60, and 127–152; these read MESQ…SVTS, TKAN…TPAS, and QSQF…GNTF. Disordered regions lie at residues 1–93, 126–173, and 352–421; these read MESQ…MMTQ, PQSQ…RPPP, and GSRN…SKST. Over residues 153 to 165 the composition is skewed to low complexity; sequence TDSSSADSDMTST. An RNA-binding region spans residues 299–401; it reads NNGIHINNKV…NSKSKTARAH (103 aa). Low complexity predominate over residues 402-418; it reads NVSTSNNSPSTDNDSIS. Ser416 carries the phosphoserine modification. Asp461 (for protease activity; shared with dimeric partner) is an active-site residue. The segment at 583–640 is integrase-type zinc finger-like; sequence NVHTSESTRKYPYPFIHRMLAHANAQTIRYSLKNNTITYFNESDVDWSSAIDYQCPDC. Positions 660-835 constitute an Integrase catalytic domain; sequence NSYEPFQYLH…AGLDISTLLP (176 aa). Residues Asp671 and Asp736 each coordinate Mg(2+). 3 disordered regions span residues 956 to 1087, 1092 to 1111, and 1130 to 1187; these read SKAV…ETEK, RSPS…NIVP, and DLPL…DNET. The segment covering 960–969 has biased composition (low complexity); that stretch reads SPTDSTPPST. Residues 1005 to 1015 show a composition bias toward polar residues; that stretch reads STPQISNIEST. Positions 1038–1053 are enriched in basic and acidic residues; the sequence is ESSHASKSKDFRHSDS. Composition is skewed to polar residues over residues 1054–1082 and 1101–1111; these read YSEN…QISD and PENNSSHNIVP. Positions 1178–1212 match the Bipartite nuclear localization signal motif; it reads KKRSLEDNETEIKVSRDTWNTKNMRSLEPPRSKKR. One can recognise a Reverse transcriptase Ty1/copia-type domain in the interval 1338–1476; that stretch reads NNYYITQLDI…DILGLEIKYQ (139 aa). Residues Asp1346, Asp1427, Asp1428, Asp1610, Glu1652, and Asp1685 each coordinate Mg(2+). Residues 1610–1752 enclose the RNase H Ty1/copia-type domain; it reads DASYGNQPYY…IKTFKLLTNK (143 aa).

In terms of assembly, the capsid protein forms a homotrimer, from which the VLPs are assembled. The protease is a homodimer, whose active site consists of two apposed aspartic acid residues. Post-translationally, initially, virus-like particles (VLPs) are composed of the structural unprocessed proteins Gag and Gag-Pol, and also contain the host initiator methionine tRNA (tRNA(i)-Met) which serves as a primer for minus-strand DNA synthesis, and a dimer of genomic Ty RNA. Processing of the polyproteins occurs within the particle and proceeds by an ordered pathway, called maturation. First, the protease (PR) is released by autocatalytic cleavage of the Gag-Pol polyprotein yielding capsid protein p45 and a Pol-p154 precursor protein. This cleavage is a prerequisite for subsequent processing of Pol-p154 at the remaining sites to release the mature structural and catalytic proteins. Maturation takes place prior to the RT reaction and is required to produce transposition-competent VLPs.

Its subcellular location is the cytoplasm. It is found in the nucleus. It carries out the reaction DNA(n) + a 2'-deoxyribonucleoside 5'-triphosphate = DNA(n+1) + diphosphate. The enzyme catalyses Endonucleolytic cleavage to 5'-phosphomonoester.. Its function is as follows. Capsid protein (CA) is the structural component of the virus-like particle (VLP), forming the shell that encapsulates the retrotransposons dimeric RNA genome. The particles are assembled from trimer-clustered units and there are holes in the capsid shells that allow for the diffusion of macromolecules. CA also has nucleocapsid-like chaperone activity, promoting primer tRNA(i)-Met annealing to the multipartite primer-binding site (PBS), dimerization of Ty1 RNA and initiation of reverse transcription. The aspartyl protease (PR) mediates the proteolytic cleavages of the Gag and Gag-Pol polyproteins after assembly of the VLP. Functionally, reverse transcriptase/ribonuclease H (RT) is a multifunctional enzyme that catalyzes the conversion of the retro-elements RNA genome into dsDNA within the VLP. The enzyme displays a DNA polymerase activity that can copy either DNA or RNA templates, and a ribonuclease H (RNase H) activity that cleaves the RNA strand of RNA-DNA heteroduplexes during plus-strand synthesis and hydrolyzes RNA primers. The conversion leads to a linear dsDNA copy of the retrotransposon that includes long terminal repeats (LTRs) at both ends. In terms of biological role, integrase (IN) targets the VLP to the nucleus, where a subparticle preintegration complex (PIC) containing at least integrase and the newly synthesized dsDNA copy of the retrotransposon must transit the nuclear membrane. Once in the nucleus, integrase performs the integration of the dsDNA into the host genome. In Saccharomyces cerevisiae (Baker's yeast), this protein is Transposon TyH3 Gag-Pol polyprotein (TY1B).